The primary structure comprises 694 residues: Ribonuclease R (694 aa).

Positions 204-525 (RKDLRDLLCF…IVHRLLFHPL (322 aa)) constitute an RNB domain. Residues 571-648 (ATLYKAFIIT…LTQSIEWTLV (78 aa)) form the S1 motif domain. Residues 652-694 (TKAKAKRTSKKKKTESVTTKEKKKSPAKKKKGATKTKKGSGKN) are disordered. Basic residues-rich tracts occupy residues 654–664 (AKAKRTSKKKK) and 672–694 (EKKKSPAKKKKGATKTKKGSGKN).

The protein belongs to the RNR ribonuclease family. RNase R subfamily.

The protein localises to the cytoplasm. It carries out the reaction Exonucleolytic cleavage in the 3'- to 5'-direction to yield nucleoside 5'-phosphates.. In terms of biological role, 3'-5' exoribonuclease that releases 5'-nucleoside monophosphates and is involved in maturation of structured RNAs. The protein is Ribonuclease R of Chlamydia trachomatis serovar D (strain ATCC VR-885 / DSM 19411 / UW-3/Cx).